The chain runs to 85 residues: UPF0291 protein SEQ_0545 (85 aa).

The interval T62–S85 is disordered.

This sequence belongs to the UPF0291 family.

It localises to the cytoplasm. This is UPF0291 protein SEQ_0545 from Streptococcus equi subsp. equi (strain 4047).